Here is a 147-residue protein sequence, read N- to C-terminus: MIRRRKKVRKLRGSHTHGWGCKKKHRGGGSKGGRGMAGTGKRNKSKWTWTIKYAPDHLGKRGFSRPPEVQRDVRIVTLKFIDEHLEDLLQMGIAYEEEGKIVVDTTQFADKVLGTGRLTRPLTIKAKAFSAKAEEKIKAAGGEVILA.

The span at 1–28 shows a compositional bias: basic residues; the sequence is MIRRRKKVRKLRGSHTHGWGCKKKHRGG. Residues 1-43 are disordered; that stretch reads MIRRRKKVRKLRGSHTHGWGCKKKHRGGGSKGGRGMAGTGKRN. Residues 29-38 are compositionally biased toward gly residues; that stretch reads GSKGGRGMAG.

This sequence belongs to the universal ribosomal protein uL15 family. Part of the 50S ribosomal subunit.

Functionally, binds to the 23S rRNA. The polypeptide is Large ribosomal subunit protein uL15 (Pyrococcus horikoshii (strain ATCC 700860 / DSM 12428 / JCM 9974 / NBRC 100139 / OT-3)).